Reading from the N-terminus, the 130-residue chain is Small ribosomal subunit protein uS8 (130 aa).

The protein belongs to the universal ribosomal protein uS8 family. As to quaternary structure, part of the 30S ribosomal subunit. Contacts proteins S5 and S12.

Its function is as follows. One of the primary rRNA binding proteins, it binds directly to 16S rRNA central domain where it helps coordinate assembly of the platform of the 30S subunit. This chain is Small ribosomal subunit protein uS8, found in Vibrio cholerae serotype O1 (strain ATCC 39541 / Classical Ogawa 395 / O395).